Consider the following 257-residue polypeptide: Nickel import system ATP-binding protein NikD (257 aa).

An ABC transporter domain is found at 4 to 245 (IDIQNLTIKN…HLHPYTEQLI (242 aa)). Position 37 to 44 (37 to 44 (GESGAGKS)) interacts with ATP.

Belongs to the ABC transporter superfamily. The complex is composed of two ATP-binding proteins (NikD and NikE), two transmembrane proteins (NikB and NikC) and a solute-binding protein (NikA).

It is found in the cell membrane. It catalyses the reaction Ni(2+)(out) + ATP + H2O = Ni(2+)(in) + ADP + phosphate + H(+). Part of the ABC transporter complex NikABCDE (Opp2) involved in nickel import. Probably responsible for energy coupling to the transport system. This Staphylococcus aureus (strain bovine RF122 / ET3-1) protein is Nickel import system ATP-binding protein NikD.